We begin with the raw amino-acid sequence, 133 residues long: ATP synthase epsilon chain (133 aa).

This sequence belongs to the ATPase epsilon chain family. F-type ATPases have 2 components, CF(1) - the catalytic core - and CF(0) - the membrane proton channel. CF(1) has five subunits: alpha(3), beta(3), gamma(1), delta(1), epsilon(1). CF(0) has three main subunits: a, b and c.

Its subcellular location is the cell membrane. Its function is as follows. Produces ATP from ADP in the presence of a proton gradient across the membrane. In Clostridium botulinum (strain ATCC 19397 / Type A), this protein is ATP synthase epsilon chain.